The primary structure comprises 234 residues: 2-C-methyl-D-erythritol 4-phosphate cytidylyltransferase (234 aa).

This sequence belongs to the IspD/TarI cytidylyltransferase family. IspD subfamily.

The enzyme catalyses 2-C-methyl-D-erythritol 4-phosphate + CTP + H(+) = 4-CDP-2-C-methyl-D-erythritol + diphosphate. Its pathway is isoprenoid biosynthesis; isopentenyl diphosphate biosynthesis via DXP pathway; isopentenyl diphosphate from 1-deoxy-D-xylulose 5-phosphate: step 2/6. Its function is as follows. Catalyzes the formation of 4-diphosphocytidyl-2-C-methyl-D-erythritol from CTP and 2-C-methyl-D-erythritol 4-phosphate (MEP). This is 2-C-methyl-D-erythritol 4-phosphate cytidylyltransferase from Pseudomonas paraeruginosa (strain DSM 24068 / PA7) (Pseudomonas aeruginosa (strain PA7)).